Here is a 334-residue protein sequence, read N- to C-terminus: Phosphate acyltransferase (334 aa).

The protein belongs to the PlsX family. As to quaternary structure, homodimer. Probably interacts with PlsY.

It localises to the cytoplasm. It carries out the reaction a fatty acyl-[ACP] + phosphate = an acyl phosphate + holo-[ACP]. It participates in lipid metabolism; phospholipid metabolism. In terms of biological role, catalyzes the reversible formation of acyl-phosphate (acyl-PO(4)) from acyl-[acyl-carrier-protein] (acyl-ACP). This enzyme utilizes acyl-ACP as fatty acyl donor, but not acyl-CoA. This is Phosphate acyltransferase from Clostridium kluyveri (strain NBRC 12016).